A 62-amino-acid chain; its full sequence is Phylloseptin-Az7 (62 aa).

The N-terminal stretch at 1–19 (LKKSLFLVLFLGLVSLSIC) is a signal peptide. The propeptide occupies 20-40 (EEEKRETEEKENEQEDDKSEE). Phe61 carries the phenylalanine amide modification.

Belongs to the frog skin active peptide (FSAP) family. Phylloseptin subfamily. In terms of tissue distribution, expressed by the skin glands.

Its subcellular location is the secreted. In terms of biological role, has antimicrobial activity. The chain is Phylloseptin-Az7 (psn15) from Pithecopus azureus (Orange-legged monkey tree frog).